A 408-amino-acid polypeptide reads, in one-letter code: MGINEIIMYIMMFFMLIAAVDRILSQFGGSARFLGKFGKSIEGSGGQFEEGFMAMGALGLAMVGMTALAPVLAHVLGPVIIPVYEMLGANPSMFAGTLLACDMGGFFLAKELAGGDVAAWLYSGLILGSMMGPTIVFSIPVALGIIEPSDRRYLALGVLAGIVTIPIGCIAGGLIAMYSGVQINGQPVEFTFALILMNMIPVLIVAVLVALGLKFIPEKMINGFQIFAKFLVALITIGLAAAVVKFLLGWELIPGLDPIFMAPGDKPGEVMRAIEVIGSISCVLLGAYPMVLLLTRWFEKPLMNVGKLLNVNNIAAAGMVATLANNIPMFGMMKQMDTRGKVINCAFAVSAAFALGDHLGFAAANMNAMIFPMIVGKLIGGVTAIGVAMMLVPKDDAAQVKTEAEAQS.

The next 11 membrane-spanning stretches (helical) occupy residues 1–21 (MGIN…AAVD), 61–81 (AMVG…PVII), 89–109 (ANPS…FFLA), 126–146 (ILGS…LGII), 155–175 (ALGV…GGLI), 192–212 (FALI…VALG), 230–250 (FLVA…LLGW), 274–294 (IEVI…VLLL), 313–333 (NIAA…FGMM), 342–362 (VINC…LGFA), and 369–389 (MIFP…GVAM).

It belongs to the EutH family.

The protein localises to the cell inner membrane. The enzyme catalyses ethanolamine(in) = ethanolamine(out). It functions in the pathway amine and polyamine degradation; ethanolamine degradation. Functionally, probably involved in the diffusion of protonated ethanolamine (EA) into the cell at low pH. At low pH most EA is protonated, and this permease becomes necessary. Contributes to bacterial survival and replication in acidified macrophage vacuoles, but not to bacterial uptake by macrophages. Expression of the eut operon allows this bacteria to use ethanolamine (EA) as a carbon, nitrogen and energy source. It relies on cobalamin (vitamin B12) both as a cofactor for the ethanolamine ammonia-lyase (EAL) activity and to induce the operon. EA enhances bacterial survival in macrophages in a concentration-dependent manner, suggesting it is an important nutrient during infection. This chain is Probable ethanolamine permease EutH, found in Salmonella typhimurium (strain LT2 / SGSC1412 / ATCC 700720).